Consider the following 271-residue polypeptide: 4-hydroxy-tetrahydrodipicolinate reductase (271 aa).

NAD(+)-binding positions include 12 to 17 and Glu-38; that span reads GGSGRM. Arg-39 provides a ligand contact to NADP(+). NAD(+) is bound by residues 102–104 and 126–129; these read GTT and APNM. His-159 acts as the Proton donor/acceptor in catalysis. His-160 is a (S)-2,3,4,5-tetrahydrodipicolinate binding site. Residue Lys-163 is the Proton donor of the active site. 169 to 170 is a binding site for (S)-2,3,4,5-tetrahydrodipicolinate; that stretch reads GT.

It belongs to the DapB family.

Its subcellular location is the cytoplasm. The catalysed reaction is (S)-2,3,4,5-tetrahydrodipicolinate + NAD(+) + H2O = (2S,4S)-4-hydroxy-2,3,4,5-tetrahydrodipicolinate + NADH + H(+). The enzyme catalyses (S)-2,3,4,5-tetrahydrodipicolinate + NADP(+) + H2O = (2S,4S)-4-hydroxy-2,3,4,5-tetrahydrodipicolinate + NADPH + H(+). It functions in the pathway amino-acid biosynthesis; L-lysine biosynthesis via DAP pathway; (S)-tetrahydrodipicolinate from L-aspartate: step 4/4. Functionally, catalyzes the conversion of 4-hydroxy-tetrahydrodipicolinate (HTPA) to tetrahydrodipicolinate. In Shewanella sediminis (strain HAW-EB3), this protein is 4-hydroxy-tetrahydrodipicolinate reductase.